The chain runs to 366 residues: MWPLLLAVALSTLLPLAMPGSAGAVRIKDIATFSGVRDNQLVGYGLVVGLGGTGDKKESVFTVSSMVNMLERMGVAVDPKQLKPKNVASVMVTARMPVSAKPGARLDVTVSSMGDATSLLGGVLLQTPLKGVDGKIYGLAQGSLALGGFSAEGQAARAQKNITTVGLIPGGAIIERGVPFEFNQQDRLTLNLSTADFSTAQQVAERLNAAMGGRYANAVDASTVAMDVPPNYRGNLVPLMASVENIEVAPDAPARVVVDEKTGTVVLGRDVRISRVAVAHGSLQVTVQESQQVSQPAPFSQGQTVVTPQTNVNVREENRRLMMIEGATLQELVDGLNAIGATPRDLISILRAMKAAGALHAELEVI.

Residues 1-24 (MWPLLLAVALSTLLPLAMPGSAGA) form the signal peptide.

This sequence belongs to the FlgI family. The basal body constitutes a major portion of the flagellar organelle and consists of four rings (L,P,S, and M) mounted on a central rod.

Its subcellular location is the periplasm. The protein localises to the bacterial flagellum basal body. Functionally, assembles around the rod to form the L-ring and probably protects the motor/basal body from shearing forces during rotation. This chain is Flagellar P-ring protein, found in Nitratidesulfovibrio vulgaris (strain ATCC 29579 / DSM 644 / CCUG 34227 / NCIMB 8303 / VKM B-1760 / Hildenborough) (Desulfovibrio vulgaris).